The chain runs to 285 residues: HTH-type transcriptional activator AmpR (285 aa).

Residues 5 to 62 form the HTH lysR-type domain; it reads LPLNALRAFEASARHLSFTRAALELCVTQAAVSQQVRILEDRLNRVLFKRLPRGLEMT. Positions 22 to 41 form a DNA-binding region, H-T-H motif; that stretch reads FTRAALELCVTQAAVSQQVR.

This sequence belongs to the LysR transcriptional regulatory family.

The protein resides in the cytoplasm. In terms of biological role, this protein is a positive regulator of gene expression of beta-lactamase (AmpC). In Citrobacter koseri (Citrobacter diversus), this protein is HTH-type transcriptional activator AmpR (ampR).